The following is a 222-amino-acid chain: Countin-3 (222 aa).

The first 20 residues, 1–20 (MNKILSLFLITILLISKVMS), serve as a signal peptide directing secretion. The Saposin B-type domain occupies 21–105 (SSEECKLCTD…ESVKMCQYND (85 aa)). Intrachain disulfides connect Cys-25/Cys-101, Cys-28/Cys-95, and Cys-56/Cys-68. 3 N-linked (GlcNAc...) asparagine glycosylation sites follow: Asn-108, Asn-134, and Asn-218.

The protein belongs to the countin family.

It localises to the secreted. In terms of biological role, may control the size of the multicellular structure. In Dictyostelium discoideum (Social amoeba), this protein is Countin-3 (ctnC).